The following is a 346-amino-acid chain: GTPase Obg (346 aa).

In terms of domain architecture, Obg spans 1–159 (MKFLDEAKVY…RWIWLRLKLI (159 aa)). The region spanning 160 to 327 (ADAGLVGLPN…ALRALVAVIG (168 aa)) is the OBG-type G domain. GTP-binding positions include 166–173 (GLPNAGKS), 191–195 (FTTLH), 212–215 (DIPG), 279–282 (NKID), and 308–310 (SAA). S173 and T193 together coordinate Mg(2+).

This sequence belongs to the TRAFAC class OBG-HflX-like GTPase superfamily. OBG GTPase family. As to quaternary structure, monomer. The cofactor is Mg(2+).

Its subcellular location is the cytoplasm. Its function is as follows. An essential GTPase which binds GTP, GDP and possibly (p)ppGpp with moderate affinity, with high nucleotide exchange rates and a fairly low GTP hydrolysis rate. Plays a role in control of the cell cycle, stress response, ribosome biogenesis and in those bacteria that undergo differentiation, in morphogenesis control. The chain is GTPase Obg from Bradyrhizobium diazoefficiens (strain JCM 10833 / BCRC 13528 / IAM 13628 / NBRC 14792 / USDA 110).